Reading from the N-terminus, the 381-residue chain is Putative F-box protein At3g17500 (381 aa).

Positions 1-45 (MMSNLPLDLVEEILSRVPATSLKRLRSTCKSWNNCYKDQRFTEKH) constitute an F-box domain.

The chain is Putative F-box protein At3g17500 from Arabidopsis thaliana (Mouse-ear cress).